Here is a 1033-residue protein sequence, read N- to C-terminus: MGSQPPPPGSPLSREEGEAPPLVPAEEGRRRSRRVRLRGSCRHRPSLLSRRELASNGPAVPATASSEIMASAAKEFKMDNFSPKAGTSKLQQTVPADASPDSKCPICLDRFDNVSYLDRCLHKFCFRCVQEWSKNKAECPLCKQPFDSIFHSVRAEDDFKEYVLRPSYNGSFTNPEVRRFRYRTTMTRERSASLYSPSSTVSRRTTTPPDSGVLFEGLGISTRPRDVDIPQFMRQMALRGPTTTDERSLRKIQEQDIINFRRTLYRAGVRVRSIEDGGRYRDISAEFFRRNPACLHRLVPWLKRELTVLFGAHGSLVNIVQHIIMSNVTRYDLESQAFVSDLRPFLLNRTEHFIHEFISFARSPFNMAAFDQHANYDCPPSSEEGSRSDSSVITISPDEAETQELDMNASTVRQAPWDDETPGPSYSSSEQVHVGVSSLLNSSDSSDEELVSGGTTSQIQGVQTNDDVNNDSDSSSDNCVIVGFVKPLAERTPELVELSSDSEELGPYEKVETVKTQEQEQSYSSGDSDVSRASSPRSVLGKDEQMSKSHCDSDTRISSKKEEKRSTSLPAPRDSSSTRGDRVCSPYNHRHRKGGRSRSSDSRSQSRSGHDPRNHRKHGKKRLRNKRSRSRESSSRPRARKDKKRSRTRDSSWSRRSQTLSLSSGSTSRSRSRSSDHGKRRSRSRNRDRYYLRNNYGSKYKWEYTYYSRNKDRDGYESSYRRRTLSRAHYSRQSSSPEFRIQSFSERTNARKKNHSERKYYYYERRRSRSVSSNRSRTTSAGPDRVRNEKPGGKRKYKTRHLEGTSEEAQPAREFTSKGKDSHYQKSKLDGSYKNESDSFSDSRSSDRETKHKRRRRRTRSLSVEIVYEGKATDTSKHHKKKKKKHKKKHKKHHGDNTSRSPVVITIDSDSDGESEVKAGIECSNGSLPQPIQDGAFETKDVVTIEDELGVLDKDCDVTALADDLSTSQTVENCDSPAVPVEQTLDVREESTFASDLESQSSNVSIQAEPSRPVPSPRTSLSSVSPGRDCDVS.

Residues 1–10 show a composition bias toward pro residues; sequence MGSQPPPPGS. Positions 1–36 are disordered; that stretch reads MGSQPPPPGSPLSREEGEAPPLVPAEEGRRRSRRVR. The interval 52 to 376 is required for DNA-binding; it reads ELASNGPAVP…MAAFDQHANY (325 aa). Glycyl lysine isopeptide (Lys-Gly) (interchain with G-Cter in SUMO2) cross-links involve residues Lys74, Lys77, Lys84, and Lys89. Ser99 carries the post-translational modification Phosphoserine. The RING-type zinc-finger motif lies at 104–143; that stretch reads CPICLDRFDNVSYLDRCLHKFCFRCVQEWSKNKAECPLCK. A Glycyl lysine isopeptide (Lys-Gly) (interchain with G-Cter in SUMO2) cross-link involves residue Lys160. Ser196 is subject to Phosphoserine. A Glycyl lysine isopeptide (Lys-Gly) (interchain with G-Cter in SUMO2) cross-link involves residue Lys251. Disordered regions lie at residues 414 to 477 and 496 to 692; these read QAPW…SSSD and VELS…RYYL. Positions 434–444 are enriched in low complexity; it reads VGVSSLLNSSD. A sumoylation and localization to discrete nuclear foci region spans residues 438-574; it reads SLLNSSDSSD…RSTSLPAPRD (137 aa). Residues 438–654 are interaction with SUMO1; the sequence is SLLNSSDSSD…RSRTRDSSWS (217 aa). Residues 455–464 are compositionally biased toward polar residues; the sequence is TTSQIQGVQT. An interaction with p53/TP53 region spans residues 457-731; it reads SQIQGVQTND…RRTLSRAHYS (275 aa). An interaction with TOP1 region spans residues 457 to 879; it reads SQIQGVQTND…GKATDTSKHH (423 aa). Residues 465-477 show a composition bias toward low complexity; it reads NDDVNNDSDSSSD. Residue Ser500 is modified to Phosphoserine. Over residues 507–518 the composition is skewed to basic and acidic residues; sequence PYEKVETVKTQE. Positions 522–535 are enriched in low complexity; sequence SYSSGDSDVSRASS. Residues 540–566 show a composition bias toward basic and acidic residues; the sequence is LGKDEQMSKSHCDSDTRISSKKEEKRS. Lys561 participates in a covalent cross-link: Glycyl lysine isopeptide (Lys-Gly) (interchain with G-Cter in SUMO). Ser585 is subject to Phosphoserine. Composition is skewed to basic residues over residues 613–629 and 637–647; these read RNHR…KRSR and PRARKDKKRSR. Residues 654 to 669 are compositionally biased toward low complexity; sequence SRRSQTLSLSSGSTSR. Lys701 participates in a covalent cross-link: Glycyl lysine isopeptide (Lys-Gly) (interchain with G-Cter in SUMO2). Disordered stretches follow at residues 713 to 934 and 970 to 1033; these read RDGY…PIQD and TVEN…CDVS. Ser718 carries the phosphoserine; by PLK1 modification. The segment covering 721–730 has biased composition (basic residues); sequence RRRTLSRAHY. The segment covering 731-747 has biased composition (polar residues); it reads SRQSSSPEFRIQSFSER. Ser734 carries the post-translational modification Phosphoserine. Low complexity predominate over residues 770–780; the sequence is SVSSNRSRTTS. The span at 815–837 shows a compositional bias: basic and acidic residues; it reads FTSKGKDSHYQKSKLDGSYKNES. Glycyl lysine isopeptide (Lys-Gly) (interchain with G-Cter in SUMO2) cross-links involve residues Lys818 and Lys834. The segment covering 851-860 has biased composition (basic residues); it reads KHKRRRRRTR. The tract at residues 851–914 is interaction with UBE2I; sequence KHKRRRRRTR…ITIDSDSDGE (64 aa). Phosphoserine is present on residues Ser861 and Ser863. Basic residues predominate over residues 877–894; the sequence is KHHKKKKKKHKKKHKKHH. Residues Ser909, Ser911, Ser999, Ser1016, and Ser1025 each carry the phosphoserine modification. Residues 992-1008 are compositionally biased toward polar residues; that stretch reads TFASDLESQSSNVSIQA.

Interacts with TOP1. Interacts with the SUMO1 conjugating enzyme UBE2I. Interacts with SUMO1. Interacts with NKX3-1; polyubiquitinates NKX3-1 and induces its proteasomal degradation. Interacts with SIN3A; sumoylates SIN3A. Interacts with IKBKE; induced by DNA damage. Interacts with p53/TP53. Interacts with PARK7/DJ-1. Post-translationally, phosphorylation at Ser-99 regulates the E3 ubiquitin-protein ligase activity but not the SUMO1-protein ligase activity. Phosphorylation at Ser-718 increases the E3 ubiquitin-protein ligase activity versus the E3 SUMO1-protein ligase activity resulting in increased p53/TP53 ubiquitination and degradation. In terms of processing, sumoylated.

The protein resides in the nucleus. It localises to the PML body. It carries out the reaction S-ubiquitinyl-[E2 ubiquitin-conjugating enzyme]-L-cysteine + [acceptor protein]-L-lysine = [E2 ubiquitin-conjugating enzyme]-L-cysteine + N(6)-ubiquitinyl-[acceptor protein]-L-lysine.. Its function is as follows. Functions as an E3 ubiquitin-protein ligase and as a E3 SUMO1-protein ligase. Probable tumor suppressor involved in cell growth, cell proliferation and apoptosis that regulates p53/TP53 stability through ubiquitin-dependent degradation. May regulate chromatin modification through sumoylation of several chromatin modification-associated proteins. May be involved in DNA-damage-induced cell death through IKBKE sumoylation. This is E3 ubiquitin-protein ligase Topors (Topors) from Mus musculus (Mouse).